A 308-amino-acid polypeptide reads, in one-letter code: Heme A synthase (308 aa).

Residues 1–8 are Cytoplasmic-facing; the sequence is MFKKRNLK. Residues 9–29 form a helical membrane-spanning segment; it reads WLSILATVIMAWVQLGGALVT. The Extracellular segment spans residues 30–67; sequence KTGSENGCGASWPLCHGALLPQNLPIATIIELSHRATS. Cysteine 37 and cysteine 44 are oxidised to a cystine. Glutamate 60 is a catalytic residue. Histidine 63 provides a ligand contact to heme o. Residues 68–88 traverse the membrane as a helical segment; that stretch reads ALSLIVVLWLVITAWKNIGYI. Residues 89-93 lie on the Cytoplasmic side of the membrane; it reads KEVKP. Residues 94–114 traverse the membrane as a helical segment; the sequence is LCIISVAFLLIQALVGAAAVL. Topologically, residues 115–123 are extracellular; sequence WQQNDYVLA. A helical membrane pass occupies residues 124 to 144; sequence LHFGISLISFSSVFVLTLIIF. Histidine 125 is a heme o binding site. The Cytoplasmic portion of the chain corresponds to 145–161; sequence DVDQKYEANKVHIDRKL. A helical membrane pass occupies residues 162-182; the sequence is RIYTWTMAICLYVGIYTGALV. Residues 183 to 215 lie on the Extracellular side of the membrane; sequence RHTKSSLAYGSWPLPFNDLIPHTEQDWVQLAHR. Histidine 214 provides a ligand contact to heme b. Residues 216–236 form a helical membrane-spanning segment; that stretch reads TLALIASISVFLAFNYAIKHY. The Cytoplasmic segment spans residues 237 to 244; that stretch reads QNNRTIRY. A helical membrane pass occupies residues 245–265; it reads GYTAALLLIILQIVTGALSIF. Residues 266–270 are Extracellular-facing; the sequence is THVNL. A helical membrane pass occupies residues 271 to 291; sequence IIALLHALIITFEFGLIAYLI. Residue histidine 276 participates in heme b binding. Topologically, residues 292–308 are cytoplasmic; that stretch reads VLLLRSQRVEKVKQNAY.

The protein belongs to the COX15/CtaA family. Type 1 subfamily. In terms of assembly, interacts with CtaB. Heme b is required as a cofactor.

It is found in the cell membrane. The catalysed reaction is Fe(II)-heme o + 2 A + H2O = Fe(II)-heme a + 2 AH2. The protein operates within porphyrin-containing compound metabolism; heme A biosynthesis; heme A from heme O: step 1/1. Functionally, catalyzes the conversion of heme O to heme A by two successive hydroxylations of the methyl group at C8. The first hydroxylation forms heme I, the second hydroxylation results in an unstable dihydroxymethyl group, which spontaneously dehydrates, resulting in the formyl group of heme A. The chain is Heme A synthase from Staphylococcus carnosus (strain TM300).